The sequence spans 221 residues: ATP-dependent dethiobiotin synthetase BioD (221 aa).

An ATP-binding site is contributed by 11–16; the sequence is GVGKTY. T15 contacts Mg(2+). K36 is an active-site residue. T40 contributes to the substrate binding site. Residues D48 and 107–110 contribute to the ATP site; that span reads EGAG. Residues D48 and E107 each coordinate Mg(2+).

It belongs to the dethiobiotin synthetase family. As to quaternary structure, homodimer. It depends on Mg(2+) as a cofactor.

The protein localises to the cytoplasm. The enzyme catalyses (7R,8S)-7,8-diammoniononanoate + CO2 + ATP = (4R,5S)-dethiobiotin + ADP + phosphate + 3 H(+). Its pathway is cofactor biosynthesis; biotin biosynthesis; biotin from 7,8-diaminononanoate: step 1/2. Catalyzes a mechanistically unusual reaction, the ATP-dependent insertion of CO2 between the N7 and N8 nitrogen atoms of 7,8-diaminopelargonic acid (DAPA, also called 7,8-diammoniononanoate) to form a ureido ring. The polypeptide is ATP-dependent dethiobiotin synthetase BioD (Hydrogenobaculum sp. (strain Y04AAS1)).